Reading from the N-terminus, the 379-residue chain is MTPIRYELIKTCKQTGARLGILHTPHGSFETPMFMPVGTLATVKTLSPEELKEMGAGVILSNTYHLWLRPGHDIVKEAGGLHSFMNWDRGILTDSGGFQVFSLSEFRRIEEEGVYFRNHLNGDQLFLSPEKAMEIQNALGSDIMMAFDECPPYPATYEYMKRSVERTSRWAERCLKAHQRPNEQGLFGIVQGGEFEDLRKQSAQDLVSLDFPGYAVGGLSVGEPKEVMNRVLEFTTPLLPANKPRYLMGVGSPDSLIDGAIRGIDMFDCVLPTRIGRNGTVMTSEGRVVIKNAKYARDFTPLDPNCDCYTCRNYTRAYIRHLIKCDETFGIRLTSYHNVYFLIKLMEQVRQAIREDRLGDFREQFFEQYGFNKPNAKNF.

Asp94 acts as the Proton acceptor in catalysis. Residues 94–98 (DSGGF), Asp148, Gln191, and Gly218 each bind substrate. An RNA binding region spans residues 249-255 (GVGSPDS). Asp268 (nucleophile) is an active-site residue. Positions 273–277 (TRIGR) are RNA binding; important for wobble base 34 recognition. Residues Cys306, Cys308, Cys311, and His337 each coordinate Zn(2+).

Belongs to the queuine tRNA-ribosyltransferase family. Homodimer. Within each dimer, one monomer is responsible for RNA recognition and catalysis, while the other monomer binds to the replacement base PreQ1. Zn(2+) serves as cofactor.

It catalyses the reaction 7-aminomethyl-7-carbaguanine + guanosine(34) in tRNA = 7-aminomethyl-7-carbaguanosine(34) in tRNA + guanine. Its pathway is tRNA modification; tRNA-queuosine biosynthesis. Functionally, catalyzes the base-exchange of a guanine (G) residue with the queuine precursor 7-aminomethyl-7-deazaguanine (PreQ1) at position 34 (anticodon wobble position) in tRNAs with GU(N) anticodons (tRNA-Asp, -Asn, -His and -Tyr). Catalysis occurs through a double-displacement mechanism. The nucleophile active site attacks the C1' of nucleotide 34 to detach the guanine base from the RNA, forming a covalent enzyme-RNA intermediate. The proton acceptor active site deprotonates the incoming PreQ1, allowing a nucleophilic attack on the C1' of the ribose to form the product. After dissociation, two additional enzymatic reactions on the tRNA convert PreQ1 to queuine (Q), resulting in the hypermodified nucleoside queuosine (7-(((4,5-cis-dihydroxy-2-cyclopenten-1-yl)amino)methyl)-7-deazaguanosine). The polypeptide is Queuine tRNA-ribosyltransferase (Anoxybacillus flavithermus (strain DSM 21510 / WK1)).